The sequence spans 240 residues: 3-dehydroquinate dehydratase (240 aa).

3-dehydroquinate is bound by residues serine 15, 42–44, and arginine 73; that span reads EWR. Residue histidine 132 is the Proton donor/acceptor of the active site. The active-site Schiff-base intermediate with substrate is the lysine 160. 3-dehydroquinate-binding residues include arginine 202, serine 221, and glutamine 225.

Belongs to the type-I 3-dehydroquinase family. As to quaternary structure, homodimer.

It catalyses the reaction 3-dehydroquinate = 3-dehydroshikimate + H2O. The protein operates within metabolic intermediate biosynthesis; chorismate biosynthesis; chorismate from D-erythrose 4-phosphate and phosphoenolpyruvate: step 3/7. In terms of biological role, involved in the third step of the chorismate pathway, which leads to the biosynthesis of aromatic amino acids. Catalyzes the cis-dehydration of 3-dehydroquinate (DHQ) and introduces the first double bond of the aromatic ring to yield 3-dehydroshikimate. The sequence is that of 3-dehydroquinate dehydratase from Latilactobacillus sakei subsp. sakei (strain 23K) (Lactobacillus sakei subsp. sakei).